Here is a 168-residue protein sequence, read N- to C-terminus: Putative defense protein 1 (168 aa).

An N-terminal signal peptide occupies residues 1 to 18 (MMFAYIVAVVSALALTSA). In terms of domain architecture, Reelin spans 19 to 168 (FPTGAPRSAC…SAPVKILSHH (150 aa)). Cys-28 and Cys-105 are oxidised to a cystine.

The protein belongs to the insect defense protein family. In terms of tissue distribution, very highly expressed in midgut, and highly expressed in fat body, silk gland and epidermis.

The protein resides in the secreted. Its function is as follows. As this protein is expressed upon bacterial infection, it may have antimicrobial activity. The chain is Putative defense protein 1 from Antheraea mylitta (Tasar silkworm).